The chain runs to 983 residues: UPF0182 protein MLBr00644 (983 aa).

A run of 7 helical transmembrane segments spans residues 19–39, 63–83, 113–133, 175–195, 210–230, 259–279, and 287–307; these read LIMV…LVDA, VVVF…GLAV, LIGV…AQSY, FVAV…FGGI, LQLV…YWLD, KLIL…AITL, and IGLV…PLIV.

It belongs to the UPF0182 family.

The protein localises to the cell membrane. The protein is UPF0182 protein MLBr00644 of Mycobacterium leprae (strain Br4923).